The following is a 336-amino-acid chain: Aspartate carbamoyltransferase catalytic subunit (336 aa).

Carbamoyl phosphate is bound by residues R71 and T72. L-aspartate is bound at residue K99. The carbamoyl phosphate site is built by R121, H151, and Q154. Positions 184 and 239 each coordinate L-aspartate. Residues G280 and P281 each coordinate carbamoyl phosphate.

This sequence belongs to the aspartate/ornithine carbamoyltransferase superfamily. ATCase family. As to quaternary structure, heterododecamer (2C3:3R2) of six catalytic PyrB chains organized as two trimers (C3), and six regulatory PyrI chains organized as three dimers (R2).

It catalyses the reaction carbamoyl phosphate + L-aspartate = N-carbamoyl-L-aspartate + phosphate + H(+). Its pathway is pyrimidine metabolism; UMP biosynthesis via de novo pathway; (S)-dihydroorotate from bicarbonate: step 2/3. Functionally, catalyzes the condensation of carbamoyl phosphate and aspartate to form carbamoyl aspartate and inorganic phosphate, the committed step in the de novo pyrimidine nucleotide biosynthesis pathway. The protein is Aspartate carbamoyltransferase catalytic subunit of Azotobacter vinelandii (strain DJ / ATCC BAA-1303).